Consider the following 94-residue polypeptide: Small ribosomal subunit protein uS19c (94 aa).

It belongs to the universal ribosomal protein uS19 family.

Its subcellular location is the plastid. It is found in the chloroplast. Functionally, protein S19 forms a complex with S13 that binds strongly to the 16S ribosomal RNA. The chain is Small ribosomal subunit protein uS19c from Cyanidioschyzon merolae (strain NIES-3377 / 10D) (Unicellular red alga).